The following is a 962-amino-acid chain: CRACD-like protein (962 aa).

Disordered stretches follow at residues 38–102, 131–174, and 212–871; these read GKKK…PESG, NVKM…HDVG, and PAES…QEPV. The segment covering 46–61 has biased composition (polar residues); it reads PSSTGSSTWKQSQTRN. Phosphoserine is present on S92. Over residues 224–244 the composition is skewed to basic residues; it reads AKHKLQVKPRNQRSSKMRRLS. The span at 245 to 256 shows a compositional bias: polar residues; the sequence is SRAQSESLSDLT. Over residues 266 to 278 the composition is skewed to basic and acidic residues; the sequence is EKPLLEVSPEERP. Pro residues-rich tracts occupy residues 292–303 and 354–365; these read EPGPPAPLPPPG and PPSPPEGPPNPG. A compositionally biased stretch (low complexity) spans 407–425; it reads PEGDTTPPETDPAATSEAP. Basic and acidic residues-rich tracts occupy residues 429 to 440 and 459 to 480; these read DGPERSVPKEAE and EPER…ERIG. Phosphoserine is present on S490. The segment covering 503 to 521 has biased composition (low complexity); it reads AAASEGPAASPPLAAAESP. Basic and acidic residues-rich tracts occupy residues 536–546, 555–570, 631–642, and 709–728; these read APERPKAERAE, AAPE…ELRG, KLAERGPQDSGD, and YSAE…EEKC. Residues 753 to 764 show a composition bias toward pro residues; that stretch reads PEPLSSKPPLPR. 2 stretches are compositionally biased toward basic and acidic residues: residues 784-806 and 844-869; these read PGER…RGAE and QEDK…RGQE.

The chain is CRACD-like protein from Homo sapiens (Human).